The chain runs to 188 residues: F7-2 fimbrial protein (188 aa).

The signal sequence occupies residues 1–21; the sequence is MIKSVIAGAVAMAVVSFGAYA. Cysteines 43 and 82 form a disulfide.

The protein belongs to the fimbrial protein family.

The protein localises to the fimbrium. Functionally, fimbriae (also called pili), polar filaments radiating from the surface of the bacterium to a length of 0.5-1.5 micrometers and numbering 100-300 per cell, enable bacteria to colonize the epithelium of specific host organs. The protein is F7-2 fimbrial protein (F7-2) of Escherichia coli O6:H1 (strain CFT073 / ATCC 700928 / UPEC).